The sequence spans 108 residues: Signal recognition particle 19 kDa protein (108 aa).

Belongs to the SRP19 family. Part of the signal recognition particle protein translocation system, which is composed of SRP and FtsY. Archaeal SRP consists of a 7S RNA molecule of 300 nucleotides and two protein subunits: SRP54 and SRP19.

It localises to the cytoplasm. In terms of biological role, involved in targeting and insertion of nascent membrane proteins into the cytoplasmic membrane. Binds directly to 7S RNA and mediates binding of the 54 kDa subunit of the SRP. In Thermococcus kodakarensis (strain ATCC BAA-918 / JCM 12380 / KOD1) (Pyrococcus kodakaraensis (strain KOD1)), this protein is Signal recognition particle 19 kDa protein.